The primary structure comprises 212 residues: Pyrrolidone-carboxylate peptidase (212 aa).

Catalysis depends on residues E78, C141, and H165.

This sequence belongs to the peptidase C15 family. Homotetramer.

It localises to the cytoplasm. The enzyme catalyses Release of an N-terminal pyroglutamyl group from a polypeptide, the second amino acid generally not being Pro.. In terms of biological role, removes 5-oxoproline from various penultimate amino acid residues except L-proline. The sequence is that of Pyrrolidone-carboxylate peptidase (pcp) from Staphylococcus aureus.